Here is a 186-residue protein sequence, read N- to C-terminus: Tumor necrosis factor alpha-induced protein 8-like protein 1 (186 aa).

Belongs to the TNFAIP8 family. As to quaternary structure, interacts with FBXW5; TNFAIP8L1 competes with TSC2 to bind FBXW5 increasing TSC2 stability by preventing its ubiquitination. As to expression, detected in wide variety tissues, such as neurons in brain, hepatocytes, germ cells of female and male reproductive organs, muscular tissues and variety types of cells of the epithelial origin (at protein level).

It localises to the cytoplasm. In terms of biological role, acts as a negative regulator of mTOR activity. In Mus musculus (Mouse), this protein is Tumor necrosis factor alpha-induced protein 8-like protein 1 (Tnfaip8l1).